The chain runs to 342 residues: Acetoin:2,6-dichlorophenolindophenol oxidoreductase subunit beta (342 aa).

As to quaternary structure, tetramer of 2 alpha and 2 beta subunits.

It participates in ketone degradation; acetoin degradation. In terms of biological role, catalyzes the 2,6-dichlorophenolindophenol-dependent cleavage of acetoin into acetate and acetaldehyde. The protein is Acetoin:2,6-dichlorophenolindophenol oxidoreductase subunit beta (acoB) of Bacillus subtilis (strain 168).